Here is a 227-residue protein sequence, read N- to C-terminus: Cytochrome c oxidase subunit 2 (227 aa).

At 1-14 (MAYPFQLGLQDASS) the chain is on the mitochondrial intermembrane side. Residues 15–45 (PIMEELTNFHDHTLMIVFLISSLVLYIISSM) traverse the membrane as a helical segment. The Mitochondrial matrix portion of the chain corresponds to 46–59 (LTTKMTHTSTMDAQ). The chain crosses the membrane as a helical span at residues 60–87 (EVETIWTVLPAVILILIALPSLRILYMM). Residues 88–227 (DEINNPVLTV…HFENWSTSMI (140 aa)) are Mitochondrial intermembrane-facing. H161, C196, E198, C200, H204, and M207 together coordinate Cu cation. E198 is a binding site for Mg(2+).

It belongs to the cytochrome c oxidase subunit 2 family. As to quaternary structure, component of the cytochrome c oxidase (complex IV, CIV), a multisubunit enzyme composed of 14 subunits. The complex is composed of a catalytic core of 3 subunits MT-CO1, MT-CO2 and MT-CO3, encoded in the mitochondrial DNA, and 11 supernumerary subunits COX4I, COX5A, COX5B, COX6A, COX6B, COX6C, COX7A, COX7B, COX7C, COX8 and NDUFA4, which are encoded in the nuclear genome. The complex exists as a monomer or a dimer and forms supercomplexes (SCs) in the inner mitochondrial membrane with NADH-ubiquinone oxidoreductase (complex I, CI) and ubiquinol-cytochrome c oxidoreductase (cytochrome b-c1 complex, complex III, CIII), resulting in different assemblies (supercomplex SCI(1)III(2)IV(1) and megacomplex MCI(2)III(2)IV(2)). Found in a complex with TMEM177, COA6, COX18, COX20, SCO1 and SCO2. Interacts with TMEM177 in a COX20-dependent manner. Interacts with COX20. Interacts with COX16. Cu cation is required as a cofactor.

The protein resides in the mitochondrion inner membrane. It catalyses the reaction 4 Fe(II)-[cytochrome c] + O2 + 8 H(+)(in) = 4 Fe(III)-[cytochrome c] + 2 H2O + 4 H(+)(out). Its function is as follows. Component of the cytochrome c oxidase, the last enzyme in the mitochondrial electron transport chain which drives oxidative phosphorylation. The respiratory chain contains 3 multisubunit complexes succinate dehydrogenase (complex II, CII), ubiquinol-cytochrome c oxidoreductase (cytochrome b-c1 complex, complex III, CIII) and cytochrome c oxidase (complex IV, CIV), that cooperate to transfer electrons derived from NADH and succinate to molecular oxygen, creating an electrochemical gradient over the inner membrane that drives transmembrane transport and the ATP synthase. Cytochrome c oxidase is the component of the respiratory chain that catalyzes the reduction of oxygen to water. Electrons originating from reduced cytochrome c in the intermembrane space (IMS) are transferred via the dinuclear copper A center (CU(A)) of subunit 2 and heme A of subunit 1 to the active site in subunit 1, a binuclear center (BNC) formed by heme A3 and copper B (CU(B)). The BNC reduces molecular oxygen to 2 water molecules using 4 electrons from cytochrome c in the IMS and 4 protons from the mitochondrial matrix. This is Cytochrome c oxidase subunit 2 (MT-CO2) from Lophuromys flavopunctatus (Yellow-spotted brush-furred rat).